Reading from the N-terminus, the 267-residue chain is 2-keto-3-deoxy-L-rhamnonate aldolase (267 aa).

The active-site Proton acceptor is the H49. Q151 contacts substrate. E153 serves as a coordination point for Mg(2+). The substrate site is built by A178 and D179. Residue D179 participates in Mg(2+) binding.

Belongs to the HpcH/HpaI aldolase family. KDR aldolase subfamily. As to quaternary structure, homohexamer. It depends on Mg(2+) as a cofactor.

The enzyme catalyses 2-dehydro-3-deoxy-L-rhamnonate = (S)-lactaldehyde + pyruvate. Its function is as follows. Catalyzes the reversible retro-aldol cleavage of 2-keto-3-deoxy-L-rhamnonate (KDR) to pyruvate and lactaldehyde. This Escherichia coli O157:H7 protein is 2-keto-3-deoxy-L-rhamnonate aldolase.